Reading from the N-terminus, the 291-residue chain is MSARIIDGNALAARVRGEIAARAAALTDRGTQPCLAVLLVGENPASAVYVRSKVAACEKAGIRSLRFDYPQDVDPAVVMEKLAALNADPSVHGILVQLPLPPQFDEAAVLEAISVAKDVDGFHAENVGRLSQNQEAFLPCTPHGVMKMLEAEGVPLAGAEAVVIGRSNIVGKPMAMLLTNAGATVTVCHSRTRDLRFHTGRADIVVAAIGKPRFVTGDMLKPGATVIDVGINRITDGPEAGKLCGDVDFASASEVAGLITPVPGGVGPMTITMLLENTVISAERSARAAGK.

Residues 165-167, Ser190, and Ile231 each bind NADP(+); that span reads GRS.

Belongs to the tetrahydrofolate dehydrogenase/cyclohydrolase family. As to quaternary structure, homodimer.

It carries out the reaction (6R)-5,10-methylene-5,6,7,8-tetrahydrofolate + NADP(+) = (6R)-5,10-methenyltetrahydrofolate + NADPH. The enzyme catalyses (6R)-5,10-methenyltetrahydrofolate + H2O = (6R)-10-formyltetrahydrofolate + H(+). Its pathway is one-carbon metabolism; tetrahydrofolate interconversion. In terms of biological role, catalyzes the oxidation of 5,10-methylenetetrahydrofolate to 5,10-methenyltetrahydrofolate and then the hydrolysis of 5,10-methenyltetrahydrofolate to 10-formyltetrahydrofolate. The protein is Bifunctional protein FolD of Azoarcus sp. (strain BH72).